The primary structure comprises 334 residues: MLDDRAKLLLKALVERYIADGQPVGSRTLSKASGLELSPATIRNVMSDLEDLGLIVSPHTSAGRIPTARGYRLFVDTMLTVRQEQFAAHVLAPDQPQKVISNAANLLSSLSQFVGVVIAPRRSSVFRHIEFLRLSERRLLVIIVSPEGDVQNRVIFTETDYSQAQLIEAANYLNSHYVGLAIEQVRERLKNEVESLRSEIASLMQAAVAVSSEAMSETQDEVVISGERNLLAVTDFSNDMGHLRRAFDLFEQKAQLMRLLDIAGQAEGVRIFIGGESQVVPFEDLSIVSAPYEVDGQVVGTLGVIGPTRMAYDRMIQIVDITSKLVSNALSYHK.

It belongs to the HrcA family.

In terms of biological role, negative regulator of class I heat shock genes (grpE-dnaK-dnaJ and groELS operons). Prevents heat-shock induction of these operons. This is Heat-inducible transcription repressor HrcA from Albidiferax ferrireducens (strain ATCC BAA-621 / DSM 15236 / T118) (Rhodoferax ferrireducens).